Consider the following 245-residue polypeptide: tRNA pseudouridine synthase A (245 aa).

Asp52 serves as the catalytic Nucleophile. Position 111 (Tyr111) interacts with substrate.

The protein belongs to the tRNA pseudouridine synthase TruA family. In terms of assembly, homodimer.

It catalyses the reaction uridine(38/39/40) in tRNA = pseudouridine(38/39/40) in tRNA. Its function is as follows. Formation of pseudouridine at positions 38, 39 and 40 in the anticodon stem and loop of transfer RNAs. This chain is tRNA pseudouridine synthase A, found in Rickettsia rickettsii (strain Iowa).